The primary structure comprises 437 residues: MSPGSVLKTAPGAYLSGFGNEFATEAVPGALPEGQNSPQRAPFGLYAEQLSGSAFTAPRRENRRSWLYRLRPSANHPAFQPLAQGLLRSGPFDEVPASPNRLRWSPQPPPAQPTDFVDGLVTYAGNGDAASGAGISIHLYAANRSMVDRVFFDADGELLIVPQAGRLRLVTELGVLDVAPGEIAVVPRGVRFRAELPEGQAAGYVCENHGAFFRLPDLGPIGANGLANPRDFLTPVAAFEDVDRPTEVVQKFLGRLWSARYSYSPLDVVAWHGNLVPYKYDLARFNTINTVSFDHPDPSIFTVLTSPSEVPGTANCDFVIFPPRWMVAEHTFRPPWFHRNVMSEFMGLVHGVYDAKAGGFAPGGGSLHNCMSGHGPDRTSYEQAIQADLKPHKIKDTLAFMFESRWVIRPTRFAMETPALQQDYDACWAGFQKAKLP.

Histidine 295 (proton acceptor) is an active-site residue. The Fe cation site is built by histidine 338 and glutamate 344. Positions 353 and 374 each coordinate homogentisate. Fe cation is bound at residue histidine 374.

Belongs to the homogentisate dioxygenase family. Hexamer; dimer of trimers. It depends on Fe cation as a cofactor.

It catalyses the reaction homogentisate + O2 = 4-maleylacetoacetate + H(+). It functions in the pathway amino-acid degradation; L-phenylalanine degradation; acetoacetate and fumarate from L-phenylalanine: step 4/6. Its function is as follows. Involved in the catabolism of homogentisate (2,5-dihydroxyphenylacetate or 2,5-OH-PhAc), a central intermediate in the degradation of phenylalanine and tyrosine. Catalyzes the oxidative ring cleavage of the aromatic ring of homogentisate to yield maleylacetoacetate. This is Homogentisate 1,2-dioxygenase from Myxococcus xanthus (strain DK1622).